Reading from the N-terminus, the 192-residue chain is SRP-independent targeting protein 2 homolog (192 aa).

2 consecutive transmembrane segments (helical) span residues 16–36 and 102–122; these read ILTF…ILRF and WILI…YLLV. Residues 149–192 form a disordered region; sequence LNQPPQQQQQQQQQQHQQHATPSEPVLSKRQQKLRKKAAKYSRP. The segment covering 151–167 has biased composition (low complexity); the sequence is QPPQQQQQQQQQQHQQH. Residues 178-192 show a composition bias toward basic residues; sequence RQQKLRKKAAKYSRP.

It belongs to the TMEM208 family.

It localises to the endoplasmic reticulum membrane. May function in a SRP (signal recognition particle) and GET (guided entry of tail-anchored proteins) independent pathway for targeting a broad range of substrate proteins to the endoplasmic reticulum. Has a role in meiosis. This Schizosaccharomyces pombe (strain 972 / ATCC 24843) (Fission yeast) protein is SRP-independent targeting protein 2 homolog.